The chain runs to 299 residues: Probable lipid kinase YegS (299 aa).

The 132-residue stretch at 2–133 folds into the DAGKc domain; the sequence is AEFPASLLIL…IDMAQVNKQT (132 aa). ATP-binding positions include threonine 40, 66–72, and threonine 95; that span reads GDGTINE. Mg(2+) contacts are provided by leucine 215, aspartate 218, and leucine 220. Glutamate 271 acts as the Proton acceptor in catalysis.

Belongs to the diacylglycerol/lipid kinase family. YegS lipid kinase subfamily. Mg(2+) is required as a cofactor. The cofactor is Ca(2+).

The protein resides in the cytoplasm. Probably phosphorylates lipids; the in vivo substrate is unknown. The polypeptide is Probable lipid kinase YegS (Shigella boydii serotype 18 (strain CDC 3083-94 / BS512)).